The sequence spans 256 residues: uncharacterized protein (256 aa).

A disordered region spans residues Met1–Arg23. Basic and acidic residues predominate over residues Ile12–Arg23.

This is an uncharacterized protein from Homo sapiens (Human).